Consider the following 506-residue polypeptide: Cobyric acid synthase (506 aa).

In terms of domain architecture, GATase cobBQ-type spans 260–453 (KVGVAAIYFP…FHGIFNEPAV (194 aa)). The active-site Nucleophile is the Cys341. His445 is a catalytic residue.

Belongs to the CobB/CobQ family. CobQ subfamily.

It functions in the pathway cofactor biosynthesis; adenosylcobalamin biosynthesis. Its function is as follows. Catalyzes amidations at positions B, D, E, and G on adenosylcobyrinic A,C-diamide. NH(2) groups are provided by glutamine, and one molecule of ATP is hydrogenolyzed for each amidation. This Chlorobium chlorochromatii (strain CaD3) protein is Cobyric acid synthase.